The sequence spans 189 residues: Movement protein (189 aa).

It belongs to the tombusvirus/aureusvirus movement protein p22 family. Interacts with host protein HFI22. Post-translationally, phosphorylated.

The protein localises to the host membrane. Functionally, transports viral genome to neighboring plant cells directly through plasmosdesmata, without any budding. The movement protein allows efficient cell to cell propagation, by bypassing the host cell wall barrier. The sequence is that of Movement protein from Capsicum annuum (Capsicum pepper).